Consider the following 735-residue polypeptide: Tripartite terminase subunit 3 (735 aa).

The Nuclear localization signal motif lies at 183-189 (PKKRAKV). Residues 258–265 (VPRRHGKT) carry the Walker A motif motif. Residues 352–357 (LLFVDE) carry the Walker B motif motif. The active-site For ATPase activity is Glu357. Active-site for nuclease activity residues include Asp509, Glu581, and Asp707.

The protein belongs to the herpesviridae TRM3 protein family. Interacts with the terminase subunits TRM1 and TRM2. Interacts with portal protein.

The protein resides in the host nucleus. Component of the molecular motor that translocates viral genomic DNA in empty capsid during DNA packaging. Forms a tripartite terminase complex together with TRM1 and TRM2 in the host cytoplasm. Once the complex reaches the host nucleus, it interacts with the capsid portal vertex. This portal forms a ring in which genomic DNA is translocated into the capsid. TRM3 carries an RNase H-like nuclease activity that plays an important role for the cleavage of concatemeric viral DNA into unit length genomes. In Homo sapiens (Human), this protein is Tripartite terminase subunit 3.